Here is a 25-residue protein sequence, read N- to C-terminus: Aggression-stimulating peptide (25 aa).

As to expression, expressed by the skin glands of male frogs.

It localises to the secreted. Functionally, stimulates aggressive behavior in male frogs. No effect on female frogs. In Leptodactylus fallax (Mountain chicken frog), this protein is Aggression-stimulating peptide.